The sequence spans 210 residues: Secreted isochorismatase effector Isc1 (210 aa).

Active-site residues include aspartate 25, lysine 90, and cysteine 124.

This sequence belongs to the isochorismatase family.

The protein localises to the secreted. The protein resides in the host cytoplasm. It localises to the host nucleus. The catalysed reaction is isochorismate + H2O = (2S,3S)-2,3-dihydroxy-2,3-dihydrobenzoate + pyruvate. In terms of biological role, secreted isochorismatase required for full virulence of P.sojae. Suppresses salicylate-mediated innate immunity of the host by disrupting the plant salicylate metabolism pathway via hydrolysis of its isochorismate precursor. The polypeptide is Secreted isochorismatase effector Isc1 (Phytophthora sojae (strain P6497) (Soybean stem and root rot agent)).